A 151-amino-acid polypeptide reads, in one-letter code: MDGSKAKKVAAKKFGGPRKKSVTKSIKAGLQFPVGRIGRYLKKGRYAQRVGSGAPVYLAAVLEYLAAEVLELAGNAAKDNKKTRIVPRHLLLAIRNDQELGRLLSGVTIAHGGVIPNINPVLLPKKAAEKAEKAGAAPKSPKKTTKSPKKA.

M1 carries the post-translational modification N-acetylmethionine. Disordered regions lie at residues M1–V22 and E129–A151. Short sequence motifs (SPKK motif) lie at residues S140–K143 and S147–K150. Positions S140 to A151 are enriched in basic residues.

The protein belongs to the histone H2A family. In terms of assembly, the nucleosome is a histone octamer containing two molecules each of H2A, H2B, H3 and H4 assembled in one H3-H4 heterotetramer and two H2A-H2B heterodimers. The octamer wraps approximately 147 bp of DNA. In terms of processing, phosphorylated within its C-terminal part, probably at the SPKK motifs.

It localises to the nucleus. It is found in the chromosome. Its function is as follows. Core component of nucleosome. Nucleosomes wrap and compact DNA into chromatin, limiting DNA accessibility to the cellular machineries which require DNA as a template. Histones thereby play a central role in transcription regulation, DNA repair, DNA replication and chromosomal stability. DNA accessibility is regulated via a complex set of post-translational modifications of histones, also called histone code, and nucleosome remodeling. In Triticum aestivum (Wheat), this protein is Histone H2A.2.1.